Consider the following 218-residue polypeptide: Elongation factor Ts (218 aa).

Residues 82 to 85 (TDFV) are involved in Mg(2+) ion dislocation from EF-Tu.

Belongs to the EF-Ts family.

It localises to the cytoplasm. In terms of biological role, associates with the EF-Tu.GDP complex and induces the exchange of GDP to GTP. It remains bound to the aminoacyl-tRNA.EF-Tu.GTP complex up to the GTP hydrolysis stage on the ribosome. The sequence is that of Elongation factor Ts from Prochlorococcus marinus (strain MIT 9215).